Reading from the N-terminus, the 135-residue chain is Large ribosomal subunit protein eL32 (135 aa).

The protein belongs to the eukaryotic ribosomal protein eL32 family.

In Methanococcus maripaludis (strain C7 / ATCC BAA-1331), this protein is Large ribosomal subunit protein eL32.